A 298-amino-acid polypeptide reads, in one-letter code: MQLEKMITEGSNAASAEIDRVSTLEMCRIINDEDKTVPLAVERVLPDIAAAIDVIHAQVSGGGRLIYIGAGTSGRLGILDASECPPTYGVKPGLVVGLIAGGEYAIQHAVEGAEDSREGGVNDLKNIGLTAQDVVVGIAASGRTPYVIAGLEYARQLGCRTVGISCNPGSAVSTTAEFAITPVVGAEVVTGSSRMKAGTAQKLVLNMLSTGLMIKSGKVFGNLMVDVVATNEKLHVRQVNIVKNATGCNAEKAEAALIACERNCKTAIVMVLKNLDAAEAKKRLDQHGGFIRQVLDKE.

Residues 55–218 enclose the SIS domain; the sequence is IHAQVSGGGR…STGLMIKSGK (164 aa). Glutamate 83 (proton donor) is an active-site residue. Residue glutamate 114 is part of the active site.

The protein belongs to the GCKR-like family. MurNAc-6-P etherase subfamily. In terms of assembly, homodimer.

The enzyme catalyses N-acetyl-D-muramate 6-phosphate + H2O = N-acetyl-D-glucosamine 6-phosphate + (R)-lactate. It participates in amino-sugar metabolism; 1,6-anhydro-N-acetylmuramate degradation. The protein operates within amino-sugar metabolism; N-acetylmuramate degradation. Its pathway is cell wall biogenesis; peptidoglycan recycling. Its function is as follows. Specifically catalyzes the cleavage of the D-lactyl ether substituent of MurNAc 6-phosphate, producing GlcNAc 6-phosphate and D-lactate. Together with AnmK, is also required for the utilization of anhydro-N-acetylmuramic acid (anhMurNAc) either imported from the medium or derived from its own cell wall murein, and thus plays a role in cell wall recycling. The polypeptide is N-acetylmuramic acid 6-phosphate etherase (Escherichia fergusonii (strain ATCC 35469 / DSM 13698 / CCUG 18766 / IAM 14443 / JCM 21226 / LMG 7866 / NBRC 102419 / NCTC 12128 / CDC 0568-73)).